The chain runs to 280 residues: B3 domain-containing protein At5g25470 (280 aa).

Residues 20 to 114 (WKSLSPGQNW…FLEVQIFKND (95 aa)) constitute a DNA-binding region (TF-B3 1). Positions 122-153 (PPEVEPETEPFHPTTPKNSHKETTTASASASA) are disordered. A DNA-binding region (TF-B3 2) is located at residues 183–276 (YFVKTLTKGN…ELVTAVRVHF (94 aa)).

The protein localises to the nucleus. This Arabidopsis thaliana (Mouse-ear cress) protein is B3 domain-containing protein At5g25470.